A 257-amino-acid chain; its full sequence is Imidazole glycerol phosphate synthase subunit HisF (257 aa).

Residues Asp11 and Asp130 contribute to the active site.

The protein belongs to the HisA/HisF family. Heterodimer of HisH and HisF.

It is found in the cytoplasm. It carries out the reaction 5-[(5-phospho-1-deoxy-D-ribulos-1-ylimino)methylamino]-1-(5-phospho-beta-D-ribosyl)imidazole-4-carboxamide + L-glutamine = D-erythro-1-(imidazol-4-yl)glycerol 3-phosphate + 5-amino-1-(5-phospho-beta-D-ribosyl)imidazole-4-carboxamide + L-glutamate + H(+). The protein operates within amino-acid biosynthesis; L-histidine biosynthesis; L-histidine from 5-phospho-alpha-D-ribose 1-diphosphate: step 5/9. Its function is as follows. IGPS catalyzes the conversion of PRFAR and glutamine to IGP, AICAR and glutamate. The HisF subunit catalyzes the cyclization activity that produces IGP and AICAR from PRFAR using the ammonia provided by the HisH subunit. The chain is Imidazole glycerol phosphate synthase subunit HisF from Psychromonas ingrahamii (strain DSM 17664 / CCUG 51855 / 37).